A 127-amino-acid polypeptide reads, in one-letter code: Small ribosomal subunit protein eS8 (127 aa).

It belongs to the eukaryotic ribosomal protein eS8 family. In terms of assembly, part of the 30S ribosomal subunit.

This is Small ribosomal subunit protein eS8 from Nanoarchaeum equitans (strain Kin4-M).